Reading from the N-terminus, the 235-residue chain is Segregation and condensation protein A (235 aa).

Belongs to the ScpA family. Component of a cohesin-like complex composed of ScpA, ScpB and the Smc homodimer, in which ScpA and ScpB bind to the head domain of Smc. The presence of the three proteins is required for the association of the complex with DNA.

Its subcellular location is the cytoplasm. Functionally, participates in chromosomal partition during cell division. May act via the formation of a condensin-like complex containing Smc and ScpB that pull DNA away from mid-cell into both cell halves. The polypeptide is Segregation and condensation protein A (Streptococcus mutans serotype c (strain ATCC 700610 / UA159)).